The sequence spans 416 residues: Transcription factor LATE FLOWERING (416 aa).

Low complexity-rich tracts occupy residues 176 to 186 (STTTTTTALPP) and 200 to 212 (TSPTTKTTTTSET). 2 disordered regions span residues 176 to 226 (STTT…AGGS) and 276 to 311 (LGGPASASDPSSRPPPPPQRPRRKNVRISSDPQTVA). A basic motif; degenerate region spans residues 303 to 316 (ISSDPQTVAARLRR). Residues 303–352 (ISSDPQTVAARLRRERVSERLRVLQRLVPGGSKMDTATMLDEAASYLKFL) form the bHLH domain. The tract at residues 317–352 (ERVSERLRVLQRLVPGGSKMDTATMLDEAASYLKFL) is helix-loop-helix motif.

Belongs to the bHLH protein family. Interacts with PIL13 and PIL15.

Its subcellular location is the nucleus. Transcription factor involved in the negative regulation of flowering. May be involved in the repression of the flowering factor GI and HD1 by interacting with PIL13 and PIL15 and competing with PRR1. Possesses transactivation activity in yeast. This Oryza sativa subsp. japonica (Rice) protein is Transcription factor LATE FLOWERING.